The chain runs to 164 residues: Anterior gradient protein 3 (164 aa).

The first 19 residues, 1–19, serve as a signal peptide directing secretion; the sequence is MYFPMIELTLVLLASSNLA. A Prevents secretion from ER motif is present at residues 161 to 164; sequence QTEL.

This sequence belongs to the AGR family.

It localises to the endoplasmic reticulum. Its subcellular location is the cytoplasm. Functionally, required for calcium-mediated regulation of ciliary beat frequency in the airway. The chain is Anterior gradient protein 3 from Xenopus tropicalis (Western clawed frog).